The following is a 479-amino-acid chain: MNSASVSGESSLSDMIQTVHFSSGNPRIGETRGVMHLISDNAVSSSSSSSSSNLPIGRNPLVCVLGVPNHMTYADFCQFCGSFIQHILDMRTVRNDDIENRYSILIRFDSQESTDTFFQHFRGKQFNSLDEDVCRLLFALDVQFTGYSGSIDHTQPSAAGPIEQPTCPVCLERLDQDTGGILTTMCNHSFHCSCISNWPDSSCPVCRYCQQQPENSVCCVCQTTENLWMCVICGVVGCGRYKEGHARRHWEETEHCYSLELETQRVWDYAGDNYVHRLIQSKTDGKLVELNSHGSLSKDGCGSCEYSDSGMTDALLNSKVDMIISEYNELLQAQLENQKQYFEKLLQNVKEETEQKISEAASKAISQRLQKLQTRFDRCVKEKQFLEDLNENLVKNKDVWSTKITEMKEREKKAVRAKDEKIQGLEEQLGNLMAQMDGESEVSETKEVQDATVSTTNTSSSGAGNVIHANKKKSNRRKG.

An RING-type; atypical zinc finger spans residues 167–207 (CPVCLERLDQDTGGILTTMCNHSFHCSCISNWPDSSCPVCR). Residues 201–294 (SSCPVCRYCQ…GKLVELNSHG (94 aa)) form a UBP-type; degenerate zinc finger. Cysteine 218, cysteine 221, cysteine 230, cysteine 233, cysteine 238, histidine 245, histidine 249, and histidine 255 together coordinate Zn(2+). Residues 328–442 (NELLQAQLEN…MAQMDGESEV (115 aa)) are a coiled coil. The interval 434 to 479 (AQMDGESEVSETKEVQDATVSTTNTSSSGAGNVIHANKKKSNRRKG) is disordered. Low complexity predominate over residues 451–466 (ATVSTTNTSSSGAGNV). The span at 469-479 (ANKKKSNRRKG) shows a compositional bias: basic residues.

As to quaternary structure, component of the heteromeric E3 ligase complex made of BRIZ1 and BRIZ2. Forms heterooligomers with BRIZ1 via coiled-coil domains.

It carries out the reaction S-ubiquitinyl-[E2 ubiquitin-conjugating enzyme]-L-cysteine + [acceptor protein]-L-lysine = [E2 ubiquitin-conjugating enzyme]-L-cysteine + N(6)-ubiquitinyl-[acceptor protein]-L-lysine.. It functions in the pathway protein modification; protein ubiquitination. Its function is as follows. RING-type ubiquitin E3 ligase that binds ubiquitin and is required for seed germination and post-germination growth. The chain is BRAP2 RING ZnF UBP domain-containing protein 2 from Arabidopsis thaliana (Mouse-ear cress).